A 286-amino-acid polypeptide reads, in one-letter code: uncharacterized protein (286 aa).

The chain crosses the membrane as a helical span at residues 8–28; it reads PLSGFISSLIWWLLFFYLIMA.

It to M.jannaschii MJ1495.

Its subcellular location is the membrane. This is an uncharacterized protein from Methanocaldococcus jannaschii (strain ATCC 43067 / DSM 2661 / JAL-1 / JCM 10045 / NBRC 100440) (Methanococcus jannaschii).